The sequence spans 1337 residues: MDAPRALAAKPPTGRKMKARAPPPPGKPAAQNVHSEQKLPHDATLGSQQSLVYMKEALQNSTLDITVVLPSGLEKQSVVSGSHAMMDLLVELCLQNHLNPSHHVLEIWSSETQQPLSFKPNTLIGSLNVHTVLLKEKVPEERVKPGLTKAPEKSVRLVVNYLRTQKAVVRVSPEVPLQNILPVICAKCEVNPEHVILLRDNVAGEELELSKSLNELGIKELYAWDNRREMFRKSSLGNDETDKEKKKFLGFFKANKRSNSKAEHLGLSGADSDEDPAKSASGGDLNGCVTTPNSPSLHSRSLTLGPSLSLGNISGVSMKSDMKKRRAPPPPSPKLLGQDKVSEKASLSSQADLQKKKRRAPAPPPPQQPPPSPVVPNRKEDKEENRKSTVGVGRQVPQKPPRGTARGPPQLVLPPPPPYPPPDTDVTEPVTFPGEGAGSETSELRPKLSLPLGPGSHCSMGGVSQVPAESEETASEDTTEDSGVMSSPSDAISLDSQQDSMRSKDKWSTDQEDGSDQDLAGTPELGPQKSPSWGKSGSGSSILRTEKATMPTNDDEDLFITGHLHQTLAELDEDLEGMEENYETDTSSLTNSVNGVSNHSLQEAIIPDSGVDDIPVTFIGEVSDEPFDSGLFSSRCNNATTFNTGSIASQRSHLSPSQTEHSQPFVRTSRKEPDPSPPSQDNRKRNQPTLANTSENENPVETDPTVTSLVSKLLIDDPKAKDKGKVHGSSHSEKTQAGHGINSLRVNPRDGKDESSNSAPPPWSHHGQALGGSYGLKYGLTTYKIVPPKSEMRCYDRDVSLSTGAIKIDELGNLVSPHMNGSRTISPPSAVVETDTPPIGKVKEFWRRNSMEKYLNGPAECTIKRAPSTTITATPEKPQQDNGMKAAFTVTTPQQQPASQEYGAHLEEERSRPQSAVSCSVKVPASNPTDITFLKPQRRTSSQYVASAIAKKMGPPKVHADVVRPHKATTEQCHEEAKLARSPPTRKDDAAPNLHSEARQHEHGTNQSSVCLPSNPGVQLPAGGHPKVEVNSTYGKSSTQDYPAAVHRNSYFLPGRSSHRDRVSVGQSCGFNEKQTTSNQKANSTSNFSQALDKAHPPPLLLAEARDSGRILMNGSARTPGNCEPPHSPKESTLTSYIILQTEEKPSSLSTDGQDADDTLPSSIFGPKKKFKPVIQRPLPKDVSLHSALMEAIHSSGGREKLRKTAEQTSEGRPKKPSYVEAESERSALLAAIRGHSGTLSLRKVSSLASEELQSFRNAALGAPGLDKPQQEDLGLPPPPALPPPPAPAPQAPSASVTVSRFSTGTPSNSVNARQALMDAIRSGTGAARLRKVPLLV.

The disordered stretch occupies residues methionine 1 to histidine 41. Residues serine 47, serine 50, serine 212, serine 235, serine 272, and serine 294 each carry the phosphoserine modification. Disordered regions lie at residues serine 260–glutamate 556 and isoleucine 647–glutamine 768. A compositionally biased stretch (polar residues) spans cysteine 288–serine 317. The KKRRAP 1 signature appears at lysine 323–proline 328. Residues serine 346 and serine 349 each carry the phosphoserine modification. The KKRRAP 2 motif lies at lysine 356–proline 361. Over residues proline 361–valine 374 the composition is skewed to pro residues. Serine 372 bears the Phosphoserine mark. Positions asparagine 377 to lysine 387 are enriched in basic and acidic residues. Residues leucine 411–aspartate 423 are compositionally biased toward pro residues. Residues glutamate 469 to glutamate 480 are compositionally biased toward acidic residues. The segment covering valine 484–serine 500 has biased composition (polar residues). The residue at position 522 (threonine 522) is a Phosphothreonine. Over residues glycine 526–serine 541 the composition is skewed to low complexity. 2 stretches are compositionally biased toward polar residues: residues isoleucine 647–valine 666 and glutamine 687–valine 710. Phosphoserine is present on serine 649. Over residues leucine 714 to glutamine 736 the composition is skewed to basic and acidic residues. At serine 816 the chain carries Phosphoserine. Disordered stretches follow at residues threonine 892–valine 923 and lysine 967–alanine 991. Phosphoserine is present on serine 1038. The span at glycine 1070 to glutamine 1090 shows a compositional bias: polar residues. Disordered stretches follow at residues glycine 1070–lysine 1094, methionine 1113–threonine 1133, lysine 1145–lysine 1168, and alanine 1192–glutamate 1221. Serine 1128 carries the phosphoserine modification. WH2 domains follow at residues leucine 1185 to threonine 1205 and glutamate 1225 to valine 1245. A compositionally biased stretch (basic and acidic residues) spans glycine 1197–proline 1214. Positions glycine 1262–serine 1310 are disordered. A compositionally biased stretch (pro residues) spans leucine 1276–glutamine 1291. Residues valine 1297 to serine 1310 are compositionally biased toward polar residues. Serine 1303 bears the Phosphoserine mark. The WH2 3 domain occupies alanine 1313–valine 1333.

Identified in a complex composed of COBL, PACSIN1 and WASL. Interacts with PACSIN1, PACSIN2 and PACSIN3. Identified in a complex composed of ACTA1, COBL, GSN and TMSB4X. Interacts (via WH2 domains) with actin monomers. Interacts with DBNL. In terms of tissue distribution, detected in brain cortex and in the Purkinje cell layer in the cerebellum. Detected in hippocampus neurons, and at lower levels in testis, lung and spleen (at protein level). Detected in embryonic neural tube.

It localises to the cell membrane. The protein resides in the cytoplasm. The protein localises to the cytoskeleton. Its subcellular location is the cell projection. It is found in the ruffle. Its function is as follows. Plays an important role in the reorganization of the actin cytoskeleton. Binds to and sequesters actin monomers (G actin). Nucleates actin polymerization by assembling three actin monomers in cross-filament orientation and thereby promotes growth of actin filaments at the barbed end. Can also mediate actin depolymerization at barbed ends and severing of actin filaments. Promotes formation of cell ruffles. Regulates neuron morphogenesis and increases branching of axons and dendrites. Regulates dendrite branching in Purkinje cells. This is Protein cordon-bleu (Cobl) from Mus musculus (Mouse).